We begin with the raw amino-acid sequence, 1221 residues long: Fibulin-2 (1221 aa).

The signal sequence occupies residues 1–26; the sequence is MLLQESAGVWLALALVTALTPSPSMA. Residues 27 to 176 are subdomain NA (Cys-rich); sequence VPWQDCTGAE…ELICYQLPGC (150 aa). Positions 27 to 434 are n; sequence VPWQDCTGAE…DGSTKDLIET (408 aa). Residues 177–434 are subdomain NB (Cys-free); sequence HGNFSDAEEG…DGSTKDLIET (258 aa). A glycan (N-linked (GlcNAc...) asparagine) is linked at Asn179. Disordered stretches follow at residues 248-329 and 341-399; these read PTAA…LIPD and GAAP…PQHP. Over residues 270 to 283 the composition is skewed to acidic residues; sequence DTEEDEEEEEEETL. The segment covering 312 to 322 has biased composition (basic and acidic residues); that stretch reads QEKEAEAKAGP. A Cell attachment site motif is present at residues 421 to 423; the sequence is RGD. Cystine bridges form between Cys435–Cys462, Cys436–Cys469, Cys449–Cys470, Cys479–Cys508, Cys492–Cys509, Cys511–Cys535, Cys512–Cys542, Cys525–Cys543, Cys598–Cys610, Cys606–Cys619, and Cys621–Cys634. 3 Anaphylatoxin-like domains span residues 435–477, 478–510, and 511–543; these read CCAA…LKEK, SCVA…QCCD, and CCGL…LSCC. Residue Asn497 is glycosylated (N-linked (GlcNAc...) asparagine). An EGF-like 1; calcium-binding domain is found at 594-635; it reads DQDECLMLPGELCQHLCINTVGSYRCACFPGFELQGDGRTCR. The tract at residues 633–661 is disordered; the sequence is TCRPDRGAPQLDTARESAPRSESAQVSPN. Residues 652–661 are compositionally biased toward polar residues; sequence RSESAQVSPN. The 40-residue stretch at 669 to 708 folds into the EGF-like 2 domain; the sequence is QPNTCKDNGPCRQVCRVVGDTAMCSCFPGYAIMADGVSCE. Disulfide bonds link Cys673–Cys683, Cys679–Cys692, Cys694–Cys707, Cys713–Cys726, and Cys720–Cys735. Residues 709-755 enclose the EGF-like 3; calcium-binding domain; sequence DQDECLMGTHDCSWKQFCVNTLGSFYCVNHTVLCAEGYILNAHRKCV. An N-linked (GlcNAc...) asparagine glycan is attached at Asn737. Cys742 and Cys754 are oxidised to a cystine. The EGF-like 4; calcium-binding domain maps to 756–800; that stretch reads DINECVTDLHTCTRAEHCVNTPGSFQCYKALTCEPGYVLTDGECT. Residues 801 to 846 enclose the EGF-like 5; calcium-binding domain; sequence DVDECVTGTHNCQAGFSCQNTKGSFYCQARQRCMDGFLQDPEGNCV. 3 disulfide bridges follow: Cys805-Cys818, Cys812-Cys827, and Cys833-Cys845. The region spanning 847–894 is the EGF-like 6; calcium-binding domain; that stretch reads DINECTSLLEPCRSGFSCINTVGSYTCQRNPLVCGRGYHANEEGSECV. The EGF-like 7; calcium-binding domain occupies 895–937; the sequence is DVNECETGVHRCGEGQLCYNLPGSYRCDCKPGFQRDAFGRTCI. 15 disulfide bridges follow: Cys899-Cys912, Cys906-Cys921, Cys923-Cys936, Cys942-Cys954, Cys950-Cys963, Cys965-Cys978, Cys984-Cys993, Cys989-Cys1002, Cys1004-Cys1017, Cys1023-Cys1035, Cys1031-Cys1044, Cys1046-Cys1060, Cys1066-Cys1079, Cys1073-Cys1088, and Cys1093-Cys1105. Residues 938–979 enclose the EGF-like 8; calcium-binding domain; it reads DVNECWVSPGRLCQHTCENTPGSYRCSCAAGFLLAADGKHCE. Residues 980 to 1018 enclose the EGF-like 9; calcium-binding domain; sequence DVNECETRRCSQECANIYGSYQCYCRQGYQLAEDGHTCT. Positions 1019-1061 constitute an EGF-like 10; calcium-binding domain; it reads DIDECAQGAGILCTFRCVNVPGSYQCACPEQGYTMMANGRSCK. The EGF-like 11; calcium-binding domain occupies 1062 to 1106; that stretch reads DLDECALGTHNCSEAETCHNIQGSFRCLRFDCPPNYVRVSETKCE. Residue Asn1072 is glycosylated (N-linked (GlcNAc...) asparagine). The segment at 1111–1221 is domain III; it reads QDITECQTSP…MYIFFTTFAP (111 aa).

This sequence belongs to the fibulin family. Homotrimer; disulfide-linked. Interacts with LAMA2. Interacts with FBN1 (via N-terminal domain). Forms a ternary complex with ELN and FBN1. Component of both basement membranes and other connective tissues.

It is found in the secreted. It localises to the extracellular space. Its subcellular location is the extracellular matrix. Functionally, its binding to fibronectin and some other ligands is calcium dependent. May act as an adapter that mediates the interaction between FBN1 and ELN. This chain is Fibulin-2 (Fbln2), found in Mus musculus (Mouse).